A 1486-amino-acid chain; its full sequence is Chromosome partition protein MukB (1486 aa).

An ATP-binding site is contributed by 34 to 41 (GGNGAGKS). 3 coiled-coil regions span residues 326–418 (LEAD…QYNQ), 444–480 (LETFQAKELEATEKMLSLEQKMSMAQTAHSQFEQAYQ), and 509–603 (RHLA…RAPV). Positions 666–783 (PGGSEDQRLN…EVPLFGRAAR (118 aa)) are flexible hinge. 3 coiled-coil regions span residues 835-923 (EAEI…AKLE), 977-1115 (EMLS…TAKA), and 1209-1266 (VEAI…QNVS).

This sequence belongs to the SMC family. MukB subfamily. As to quaternary structure, homodimerization via its hinge domain. Binds to DNA via its C-terminal region. Interacts, and probably forms a ternary complex, with MukE and MukF via its C-terminal region. The complex formation is stimulated by calcium or magnesium. Interacts with tubulin-related protein FtsZ.

The protein resides in the cytoplasm. It is found in the nucleoid. Plays a central role in chromosome condensation, segregation and cell cycle progression. Functions as a homodimer, which is essential for chromosome partition. Involved in negative DNA supercoiling in vivo, and by this means organize and compact chromosomes. May achieve or facilitate chromosome segregation by condensation DNA from both sides of a centrally located replisome during cell division. The protein is Chromosome partition protein MukB of Shigella boydii serotype 4 (strain Sb227).